A 94-amino-acid chain; its full sequence is RNA-binding protein Hfq (94 aa).

In terms of domain architecture, Sm spans 9-68; that stretch reads DPFLNALRRERVPVSIYLVNGIKLQGQVESFDQFVILLKNTVSQMVYKHAISTVVPARPF. The disordered stretch occupies residues 70–94; that stretch reads VSAHHSSPAPTPAGGFNGQNDETSE.

It belongs to the Hfq family. Homohexamer.

Its function is as follows. RNA chaperone that binds small regulatory RNA (sRNAs) and mRNAs to facilitate mRNA translational regulation in response to envelope stress, environmental stress and changes in metabolite concentrations. Also binds with high specificity to tRNAs. The polypeptide is RNA-binding protein Hfq (Shewanella woodyi (strain ATCC 51908 / MS32)).